A 677-amino-acid polypeptide reads, in one-letter code: Methionine--tRNA ligase (677 aa).

Positions 15–25 (PYANGSIHLGH) match the 'HIGH' region motif. Zn(2+)-binding residues include Cys146, Cys149, Cys159, and Cys162. The 'KMSKS' region motif lies at 333–337 (KMSKS). Residue Lys336 participates in ATP binding. In terms of domain architecture, tRNA-binding spans 575 to 677 (DFAKVDLRVA…AGAKPGHQVK (103 aa)).

The protein belongs to the class-I aminoacyl-tRNA synthetase family. MetG type 1 subfamily. Homodimer. Requires Zn(2+) as cofactor.

It is found in the cytoplasm. The catalysed reaction is tRNA(Met) + L-methionine + ATP = L-methionyl-tRNA(Met) + AMP + diphosphate. Functionally, is required not only for elongation of protein synthesis but also for the initiation of all mRNA translation through initiator tRNA(fMet) aminoacylation. The protein is Methionine--tRNA ligase of Escherichia coli O6:K15:H31 (strain 536 / UPEC).